Here is a 72-residue protein sequence, read N- to C-terminus: Dermaseptin-A4 (72 aa).

Residues 1-22 form the signal peptide; the sequence is MAFLKKSLFLVLFLGMVSLSIC. Residues 23-41 constitute a propeptide that is removed on maturation; sequence EEEKREEENEQEDDEQSEE. The disordered stretch occupies residues 24-43; that stretch reads EEKREEENEQEDDEQSEEKR. Over residues 30-39 the composition is skewed to acidic residues; that stretch reads ENEQEDDEQS. At Ala69 the chain carries Alanine amide. Positions 71 to 72 are excised as a propeptide; it reads EQ.

It belongs to the frog skin active peptide (FSAP) family. Dermaseptin subfamily. In terms of tissue distribution, expressed by the skin glands.

The protein localises to the secreted. Its function is as follows. Possesses a potent antimicrobial activity against Gram-positive and Gram-negative bacteria. Probably acts by disturbing membrane functions with its amphipathic structure. This is Dermaseptin-A4 from Agalychnis annae (Blue-sided leaf frog).